We begin with the raw amino-acid sequence, 69 residues long: uncharacterized protein (69 aa).

Residues 1–21 form the signal peptide; that stretch reads MNTKFILILLVLIISTIFVNS.

The protein localises to the secreted. This is an uncharacterized protein from Dictyostelium discoideum (Social amoeba).